The sequence spans 398 residues: Formate-dependent phosphoribosylglycinamide formyltransferase (398 aa).

Residues 21-22 (EL) and glutamate 81 contribute to the N(1)-(5-phospho-beta-D-ribosyl)glycinamide site. ATP contacts are provided by residues arginine 113, lysine 154, 194 to 197 (EEYV), and glutamate 202. The ATP-grasp domain maps to 118–314 (RFAAEKVKVP…EFQVHVRSAL (197 aa)). Glutamate 273 and glutamate 285 together coordinate Mg(2+). N(1)-(5-phospho-beta-D-ribosyl)glycinamide is bound by residues aspartate 292, lysine 362, and 369–370 (RR).

Belongs to the PurK/PurT family. Homodimer.

It carries out the reaction N(1)-(5-phospho-beta-D-ribosyl)glycinamide + formate + ATP = N(2)-formyl-N(1)-(5-phospho-beta-D-ribosyl)glycinamide + ADP + phosphate + H(+). The protein operates within purine metabolism; IMP biosynthesis via de novo pathway; N(2)-formyl-N(1)-(5-phospho-D-ribosyl)glycinamide from N(1)-(5-phospho-D-ribosyl)glycinamide (formate route): step 1/1. Involved in the de novo purine biosynthesis. Catalyzes the transfer of formate to 5-phospho-ribosyl-glycinamide (GAR), producing 5-phospho-ribosyl-N-formylglycinamide (FGAR). Formate is provided by PurU via hydrolysis of 10-formyl-tetrahydrofolate. In Sulfolobus acidocaldarius (strain ATCC 33909 / DSM 639 / JCM 8929 / NBRC 15157 / NCIMB 11770), this protein is Formate-dependent phosphoribosylglycinamide formyltransferase.